A 699-amino-acid polypeptide reads, in one-letter code: SPS-sensor serine protease component SSY5 (699 aa).

Disordered stretches follow at residues 1 to 113 (MVRF…LQGF) and 129 to 158 (VKEEESQDTQNTLDVSSSTSSTLATSGNAR). A propeptide spanning residues 1 to 381 (MVRFFGLNKK…YCVKDYIKKA (381 aa)) is cleaved from the precursor. A compositionally biased stretch (polar residues) spans 24–38 (NEQNAAETSSSNVSG). Over residues 39 to 51 (NEERIDPNSHDAN) the composition is skewed to basic and acidic residues. Positions 52–78 (PENANNDDASTTFGSSIQSSSIFSRGR) are enriched in low complexity. The segment covering 83–93 (TGASSSMATSE) has biased composition (polar residues). Composition is skewed to low complexity over residues 97 to 109 (HSSGHSGSKNSKN) and 144 to 154 (SSSTSSTLATS). Positions 459–699 (FAITCAHVVL…QWDIDPQLDG (241 aa)) are serine protease. Residues His-465, Asp-545, and Ser-640 each act as charge relay system in the active site.

This sequence belongs to the peptidase S64 family. As to quaternary structure, component of the plasma membrane SPS (SSY1-PTR3-SSY5) amino acid sensor complex. Post-translationally, the propeptide is autoproteolytically cleaved from the catalytic domain but remains associated, forming an inactive protease complex. This processing occurs even in the absence of signaling.

The protein localises to the cell membrane. Its function is as follows. Protease component of the SPS-sensor system, which regulates the expression of several amino acid-metabolizing enzymes and amino acid- and peptide-permeases in response to extracellular amino acid levels by controlling the activity of two transcription factors, STP1 and STP2. Catalyzes the activation of these transcription factors, which are synthesized as latent cytoplasmic precursors, by proteolytic removal of an N-terminal inhibitory domain containing cytoplasmic retention motifs. SSY5 binds as an inactive protease complex to STP1. In response to extracellular amino acids and dependent on the other SPS-sensor components, the inhibitory propeptide is induced to dissociate, and thereby enables the catalytic domain to process STP1. The sequence is that of SPS-sensor serine protease component SSY5 (SSY5) from Saccharomyces cerevisiae (strain YJM789) (Baker's yeast).